A 402-amino-acid polypeptide reads, in one-letter code: Tryptophan synthase beta chain (402 aa).

Position 91 is an N6-(pyridoxal phosphate)lysine (K91).

This sequence belongs to the TrpB family. In terms of assembly, tetramer of two alpha and two beta chains. Pyridoxal 5'-phosphate serves as cofactor.

The enzyme catalyses (1S,2R)-1-C-(indol-3-yl)glycerol 3-phosphate + L-serine = D-glyceraldehyde 3-phosphate + L-tryptophan + H2O. Its pathway is amino-acid biosynthesis; L-tryptophan biosynthesis; L-tryptophan from chorismate: step 5/5. The beta subunit is responsible for the synthesis of L-tryptophan from indole and L-serine. This is Tryptophan synthase beta chain from Streptococcus thermophilus (strain CNRZ 1066).